The following is a 568-amino-acid chain: PTS system lactose-specific EIICB component (568 aa).

The 403-residue stretch at 7-409 (LIEKGKPFFE…VVDTIIYYPF (403 aa)) folds into the PTS EIIC type-3 domain. Helical transmembrane passes span 30–50 (GFIAGMPVILFSSIFILIAYV), 62–82 (IETFLMTPYSYSMGILAFFVG), 103–123 (INFLSTMLASMVGFLLMAAEP), 128–148 (GFLTAFMGTKGLLTAFIAAFV), 183–203 (FTVSVVLLYGLELLVKGTLGV), 222–242 (GYLGITLIFGAYAFFWFVGIH), 283–303 (FIATMGGTGATLIVPFLFMWI), 339–359 (IFFVPFIFAPIVNVWIFKFFV), and 389–409 (VLSFILAGLLVVVDTIIYYPF). Residues 466-568 (ETNVLVLCAG…ALAFVQQQFD (103 aa)) form the PTS EIIB type-3 domain. Cys473 (phosphocysteine intermediate; for EIIB activity) is an active-site residue. Position 473 is a phosphocysteine; by EIIA (Cys473).

It localises to the cell membrane. It carries out the reaction lactose(out) + N(pros)-phospho-L-histidyl-[protein] = lactose 6-phosphate(in) + L-histidyl-[protein]. In terms of biological role, the phosphoenolpyruvate-dependent sugar phosphotransferase system (sugar PTS), a major carbohydrate active transport system, catalyzes the phosphorylation of incoming sugar substrates concomitantly with their translocation across the cell membrane. The enzyme II LacEF PTS system is involved in lactose transport. This is PTS system lactose-specific EIICB component from Lactococcus lactis subsp. lactis (Streptococcus lactis).